A 302-amino-acid chain; its full sequence is Recombination-associated protein RdgC (302 aa).

This sequence belongs to the RdgC family.

It localises to the cytoplasm. It is found in the nucleoid. May be involved in recombination. The sequence is that of Recombination-associated protein RdgC from Xylella fastidiosa (strain M12).